Reading from the N-terminus, the 556-residue chain is Putative solute carrier family 22 member 31 (556 aa).

The Cytoplasmic segment spans residues 1 to 23; the sequence is MEQEARVLRAAGGFGRARRLLAS. The chain crosses the membrane as a helical span at residues 24–44; the sequence is ASWVPCIVLGLVLSSEELLTA. Topologically, residues 45–128 are extracellular; it reads QPAPHCRPDP…WNLVCGDGWK (84 aa). The helical transmembrane segment at 129 to 149 threads the bilayer; it reads VPLEQVSHLLGWLLGCVILGA. Topologically, residues 150–157 are cytoplasmic; it reads GCDRFGRR. A helical membrane pass occupies residues 158–178; it reads AVFVASLVLTTGLGASEALAA. The Extracellular portion of the chain corresponds to 179-182; the sequence is SFPT. Residues 183–203 traverse the membrane as a helical segment; it reads LLVLRLLHGGTLAGALLALYL. Residues 204-218 are Cytoplasmic-facing; sequence ARLELCDPPHRLAFS. A helical transmembrane segment spans residues 219–239; the sequence is MGAGLFSVVGTLLLPGLAALV. The Extracellular segment spans residues 240–246; the sequence is QDWRLLQ. The chain crosses the membrane as a helical span at residues 247–267; sequence GLGALMSGLLLLFWGFPALFP. The Cytoplasmic portion of the chain corresponds to 268-339; sequence ESPCWLLATG…LRTRVTWRNG (72 aa). The chain crosses the membrane as a helical span at residues 340 to 357; it reads LILGFSSLVGGGIRASFR. At 358 to 366 the chain is on the extracellular side; it reads RSLAPQVPT. A helical membrane pass occupies residues 367 to 387; the sequence is FYLPYFLEAGLEAAALVFLLL. Over 388–395 the chain is Cytoplasmic; it reads TADCCGRR. The chain crosses the membrane as a helical span at residues 396–416; the sequence is PVLLLGTMVTGLASLLLLAGA. At 417–420 the chain is on the extracellular side; it reads QYLP. Residues 421-441 traverse the membrane as a helical segment; the sequence is GWTVLFLSVLGLLASRAVSAL. Residues 442–448 are Cytoplasmic-facing; it reads SSLFAAE. Residues 449–469 form a helical membrane-spanning segment; that stretch reads VFPTVIRGAGLGLVLGAGFLG. At 470 to 483 the chain is on the extracellular side; the sequence is QAAGPLDTLHGRQG. The chain crosses the membrane as a helical span at residues 484–504; sequence FFLQQVVFASLAVLALLCVLL. Residues 505-556 are Cytoplasmic-facing; the sequence is LPESRSRGLPQSLQDADRLRRSPLLRGRPRQDHLPLLPPSNSYWAGHTPEQH. A disordered region spans residues 524–556; it reads RRSPLLRGRPRQDHLPLLPPSNSYWAGHTPEQH.

The protein belongs to the major facilitator (TC 2.A.1) superfamily. Organic cation transporter (TC 2.A.1.19) family.

The protein resides in the membrane. Organic anion transporter that mediates the uptake of ions. The sequence is that of Putative solute carrier family 22 member 31 from Homo sapiens (Human).